The chain runs to 168 residues: Gremlin-2 (168 aa).

Residues 1–21 (MFWKLSLTLLLVAVLVKVAET) form the signal peptide. The N-linked (GlcNAc...) asparagine glycan is linked to N40. Intrachain disulfides connect C73–C123, C87–C137, C97–C155, and C101–C157. One can recognise a CTCK domain in the interval 73–163 (CKTQPLRQTV…HCRCMSVNLS (91 aa)). N161 carries an N-linked (GlcNAc...) asparagine glycan.

It belongs to the DAN family. Homodimer. Interacts with BMP2, BMP4 and BMP7, but has lower affinity for BMP7 than for BMP2 and BMP4. Binds heparin; this impairs the interaction with BMP2. In terms of processing, N-glycosylated. Highly expressed in the ovary, followed by brain, spleen, colon, kidney and uterus. In ovary expressed in granulosa cells of selective early antral follicles.

Its subcellular location is the secreted. Cytokine that inhibits the activity of BMP2 and BMP4 in a dose-dependent manner, and thereby modulates signaling by BMP family members. Contributes to the regulation of embryonic morphogenesis via BMP family members. Antagonizes BMP4-induced suppression of progesterone production in granulosa cells. The protein is Gremlin-2 (Grem2) of Mus musculus (Mouse).